We begin with the raw amino-acid sequence, 177 residues long: Ribonuclease alpha-sarcin (177 aa).

Positions 1 to 27 (MVAIKNLVLVALTAVTALAVPSPLEAR) are cleaved as a signal peptide. Disulfide bonds link Cys-33-Cys-175 and Cys-103-Cys-159. His-77 is a catalytic residue. The interval 86–119 (DGKLPKGRTPIKFGKSDCDRPPKHSKDGNGKTDH) is disordered. The segment covering 99-119 (GKSDCDRPPKHSKDGNGKTDH) has biased composition (basic and acidic residues). Glu-123 serves as the catalytic Proton acceptor. His-164 functions as the Proton donor in the catalytic mechanism.

The protein belongs to the ribonuclease U2 family.

The protein resides in the secreted. The catalysed reaction is a 28S rRNA containing guanosine-adenosine pair + H2O = an [RNA fragment]-3'-adenosine-3'-phosphate + a 5'-a hydroxy-guanosine-3'-[RNA fragment].. Alpha-sarcin is specific for purines in both single- and double-stranded RNA. Its toxic action on eukaryotic cells is the result of cleavage of a single phosphodiester bond in the 60S subunit of ribosomes. Inhibits both the EFl (elongation factor 1)-dependent binding of aminoacyl-tRNA and the GTP-dependent binding of EF2 (elongation factor 2) to ribosomes. The sequence is that of Ribonuclease alpha-sarcin (sar) from Aspergillus giganteus.